The following is a 51-amino-acid chain: Insulin (51 aa).

3 cysteine pairs are disulfide-bonded: C7–C37, C19–C50, and C36–C41.

Belongs to the insulin family. As to quaternary structure, heterodimer of a B chain and an A chain linked by two disulfide bonds.

It is found in the secreted. In terms of biological role, insulin decreases blood glucose concentration. It increases cell permeability to monosaccharides, amino acids and fatty acids. It accelerates glycolysis, the pentose phosphate cycle, and glycogen synthesis in liver. The chain is Insulin (INS) from Hystrix cristata (North African crested porcupine).